We begin with the raw amino-acid sequence, 367 residues long: 3-dehydroquinate synthase (367 aa).

NAD(+)-binding positions include 69–74 (DGEAFK), 103–107 (GVVGD), 127–128 (TT), Lys-140, Lys-149, and 167–170 (TLAT). Residues Glu-182, His-245, and His-262 each contribute to the Zn(2+) site.

It belongs to the sugar phosphate cyclases superfamily. Dehydroquinate synthase family. The cofactor is Co(2+). Zn(2+) is required as a cofactor. Requires NAD(+) as cofactor.

Its subcellular location is the cytoplasm. It catalyses the reaction 7-phospho-2-dehydro-3-deoxy-D-arabino-heptonate = 3-dehydroquinate + phosphate. The protein operates within metabolic intermediate biosynthesis; chorismate biosynthesis; chorismate from D-erythrose 4-phosphate and phosphoenolpyruvate: step 2/7. Catalyzes the conversion of 3-deoxy-D-arabino-heptulosonate 7-phosphate (DAHP) to dehydroquinate (DHQ). In Azotobacter vinelandii (strain DJ / ATCC BAA-1303), this protein is 3-dehydroquinate synthase.